The primary structure comprises 118 residues: Sarafotoxin-i1 (118 aa).

The N-terminal stretch at 1-23 (MALLPRLAAGGLLLLLALAALDG) is a signal peptide. Positions 24–84 (KPAPPKLLQK…LSPLRKPQPL (61 aa)) are excised as a propeptide. 2 cysteine pairs are disulfide-bonded: Cys-85/Cys-99 and Cys-87/Cys-95. Positions 112–118 (PSPIQSS) are excised as a propeptide.

Belongs to the endothelin/sarafotoxin family. Post-translationally, different length molecules ranging from 15 (85-99) to 30 amino acids (85-114) have been found in the venom. Expressed by the venom gland.

The protein localises to the secreted. Functionally, vasoconstrictor activity. These toxins cause cardiac arrest probably as a result of coronary vasospasm. In terms of biological role, sarafotoxin-i3: vasoconstrictor activity. Causes cardiac arrest probably as a result of coronary vasospasm. Displays low agonistic activities towards endothelin-2 receptor (EDNRB) (displays affinity in the micromolar range). The protein is Sarafotoxin-i1 of Atractaspis irregularis (Variable burrowing asp).